Reading from the N-terminus, the 231-residue chain is Probable transglycosylase SceD (231 aa).

A signal peptide spans 1–27 (MKKTLLASSLAVGLGIVAGNAGHEAHA). The segment covering 103-116 (APSAVQANQVQSQE) has biased composition (polar residues). Residues 103-153 (APSAVQANQVQSQEVEAPQNAQTQQPQASTSNNSQVTATPTESKSSEGSSV) form a disordered region. Residues 119 to 137 (APQNAQTQQPQASTSNNSQ) show a composition bias toward low complexity. The segment covering 138 to 153 (VTATPTESKSSEGSSV) has biased composition (polar residues).

The protein belongs to the transglycosylase family. SceD subfamily.

The protein localises to the secreted. Its function is as follows. Is able to cleave peptidoglycan and affects clumping and separation of bacterial cells. This is Probable transglycosylase SceD (sceD) from Staphylococcus aureus (strain COL).